The primary structure comprises 482 residues: Falcipain-2b (482 aa).

Residues 1–35 (MDYHMDYIPNEVISHQGERFVDKYVDRKILKNKKS) are Cytoplasmic-facing. Residues 1–241 (MDYHMDYIPN…PLKNSKYLLD (241 aa)) constitute a propeptide, activation peptide. The Bipartite vacuolar targeting signal 1 signature appears at 16–25 (QGERFVDKYV). Residues 36–56 (LLVIISLSVLSVVGFILFYFT) traverse the membrane as a helical; Signal-anchor for type II membrane protein segment. The Lumenal segment spans residues 57 to 482 (PNFRKSDLFK…GTDAFIPLIE (426 aa)). Residue N67 is glycosylated (N-linked (GlcNAc...) asparagine). The Bipartite vacuolar targeting signal 2 motif lies at 84–105 (KSPNGKKFIVSKIDEALSFYDN). N117 carries N-linked (GlcNAc...) asparagine glycosylation. The short motif at 242–258 (QINYDAVIKKYKGNENF) is the Nose motif; required for the correct folding of the mature form element. Cystine bridges form between C280–C321, C314–C355, C340–C360, and C409–C470. The active site involves C283. Residue H415 is part of the active site. Residues 426-435 (EIVNPLTKKG) carry the Arm motif; binds to host hemoglobin and required for the inhibitory interaction between the propeptide and the catalytic domain motif.

The protein belongs to the peptidase C1 family. In terms of assembly, component of the hemozoin formation complex (HFC) composed of falcipains FP2A and/or FP2B, plasmepsins PMII, PMIII/HAP and PMIV, heme detoxifying protein HDP and falcilysin FLN. The HFC complex is involved in hemoglobin degradation and detoxification of heme in the food vacuole during the asexual blood stage.

It is found in the vacuole. The protein resides in the membrane. Its function is as follows. Cysteine protease which cleaves native host hemoglobin in the food vacuole during the asexual blood stage. Preferentially cleaves substrates which have a leucine at the P2 position. This chain is Falcipain-2b, found in Plasmodium falciparum (isolate 3D7).